The sequence spans 384 residues: Signal peptide peptidase-like 3 (384 aa).

Over 1-8 (MAEQTYSW) the chain is Lumenal. A helical membrane pass occupies residues 9–29 (AYSLVDSSQVSTFLISILLIV). Residues 30 to 73 (YGSFRSLNMDFENQDKEKDSNSSSGSFNGNSTNNSIQTIDSTQA) lie on the Cytoplasmic side of the membrane. Residues 74–94 (LFLPIGASVSLLVMFFFFDSV) traverse the membrane as a helical segment. Glutamine 95 is a topological domain (lumenal). A helical transmembrane segment spans residues 96–116 (VVFTICTAVLATIAFAFLLLP). The Cytoplasmic portion of the chain corresponds to 117–138 (MCQYLTRPCSPQNKISFGCCGR). The helical transmembrane segment at 139–159 (FTAAELLSFSLSVMLVLIWVL) threads the bilayer. The Lumenal segment spans residues 160 to 164 (TGHWL). The helical transmembrane segment at 165-185 (LMDALAMGLCVAMIAFVRLPS) threads the bilayer. The Cytoplasmic portion of the chain corresponds to 186-190 (LKVSC). The helical transmembrane segment at 191–211 (LLLSGLLIYDVFWVFFSAYIF) threads the bilayer. Aspartate 200 is a catalytic residue. Residues 212–262 (NSNVMVKVATQPADNPLDVLSRKLHLGPNVGRDVPRLSLPGKLVFPSSTGS) are Lumenal-facing. Residues 263–283 (HFSMLGIGDIVMPGLLLCFVL) traverse the membrane as a helical segment. The active site involves aspartate 271. The Cytoplasmic portion of the chain corresponds to 284–311 (RYDNYKKQASGDSCGAPGPANISGRMQK). A helical membrane pass occupies residues 312–332 (VSYFHCTLIGYFVGLLTATVA). Residues 333–339 (SRIHRAA) are Lumenal-facing. Residues 340-360 (QPALLYLVPFTLLPLLTMAYL) traverse the membrane as a helical segment. The PAL signature appears at 341 to 343 (PAL). Topologically, residues 361-384 (KGDLRRMWSEPFHSKSSSSRFLEV) are cytoplasmic.

It belongs to the peptidase A22B family. As to quaternary structure, monomer. Homodimer. Interacts with STIM1 (via transmembrane region and SOAR/CAD domain); the interaction promotes the binding of STIM1 to ORAI1. Post-translationally, not glycosylated.

Its subcellular location is the endoplasmic reticulum membrane. It localises to the golgi apparatus. The protein localises to the membrane. Its proteolytic activity is blocked by a signal peptide peptidase (SPP) inhibitor, (ZLL)2-ketone (ZLL) or a gamma-secretase inhibitor, LY411,575. Intramembrane-cleaving aspartic protease (I-CLiP) that cleaves type II membrane protein substrates in or close to their luminal transmembrane domain boundaries. Acts like a sheddase by mediating the proteolytic release and secretion of active site-containing ectodomains of glycan-modifiying glycosidase and glycosyltransferase enzymes such as MGAT5, B4GAT1 and B4GALT1. Plays a role in the regulation of cellular glycosylation processes. Required to link T-cell antigen receptor (TCR) and calcineurin-NFAT signaling cascades in lymphocytes by promoting the association of STIM1 and ORAI1 during store-operated calcium entry (SOCE) in a protease-independent manner. The sequence is that of Signal peptide peptidase-like 3 from Mus musculus (Mouse).